Reading from the N-terminus, the 111-residue chain is X antigen family member 3 (111 aa).

The tract at residues 1-111 (MIWRGRSTYR…PEGGDRQPQV (111 aa)) is disordered. Residues 29–40 (PGDEEPQQEEPP) are compositionally biased toward acidic residues. Basic and acidic residues predominate over residues 97 to 111 (EQFKMPEGGDRQPQV).

It belongs to the GAGE family.

The sequence is that of X antigen family member 3 (XAGE3) from Homo sapiens (Human).